The following is a 279-amino-acid chain: Shikimate dehydrogenase (NADP(+)) (279 aa).

Residues Ser21–Ser23 and Thr68 contribute to the shikimate site. Lys72 (proton acceptor) is an active-site residue. Position 84 (Glu84) interacts with NADP(+). 2 residues coordinate shikimate: Asn93 and Asp109. Residues Gly133–Ala137, Asn157–Lys162, and Met220 contribute to the NADP(+) site. Shikimate is bound at residue Tyr222. Position 244 (Gly244) interacts with NADP(+).

This sequence belongs to the shikimate dehydrogenase family. In terms of assembly, homodimer.

The catalysed reaction is shikimate + NADP(+) = 3-dehydroshikimate + NADPH + H(+). It functions in the pathway metabolic intermediate biosynthesis; chorismate biosynthesis; chorismate from D-erythrose 4-phosphate and phosphoenolpyruvate: step 4/7. In terms of biological role, involved in the biosynthesis of the chorismate, which leads to the biosynthesis of aromatic amino acids. Catalyzes the reversible NADPH linked reduction of 3-dehydroshikimate (DHSA) to yield shikimate (SA). The protein is Shikimate dehydrogenase (NADP(+)) of Shewanella halifaxensis (strain HAW-EB4).